A 696-amino-acid polypeptide reads, in one-letter code: DEAD-box ATP-dependent RNA helicase 7 (696 aa).

Residues 1–116 are disordered; the sequence is MPSLPVAAAE…GDEDPADPNA (116 aa). A coiled-coil region spans residues 16-97; that stretch reads ESASKKSKRK…KVVVEEEEED (82 aa). Residues 27 to 38 show a composition bias toward basic and acidic residues; that stretch reads KAAEVEVEASSR. Residues 39 to 49 are compositionally biased toward basic residues; that stretch reads KKEKKEKKRKA. Residues 67–77 show a composition bias toward low complexity; it reads STSSDEPAPAA. Positions 92-112 are enriched in acidic residues; the sequence is EEEEEDDDEGELTASGDEDPA. Residues 115 to 143 carry the Q motif motif; the sequence is NALANFRISESLREKLKSKGIKALFPIQA. A Helicase ATP-binding domain is found at 146 to 328; it reads FDLVLDGHDL…LRFLKSGKKT (183 aa). 159 to 166 lines the ATP pocket; the sequence is ARTGQGKT. The DEAD box signature appears at 274–277; it reads DEAD. One can recognise a Helicase C-terminal domain in the interval 357–500; it reads QVIPDIIRCY…ISAPQPTDVA (144 aa). Positions 641–696 are disordered; that stretch reads LPPLQEREQSGGSRGGGRFGNRRFSGGGGGRGGGGRGFGGGRGRGGGGGNRFNKRY. A compositionally biased stretch (gly residues) spans 652 to 690; the sequence is GSRGGGRFGNRRFSGGGGGRGGGGRGFGGGRGRGGGGGN.

The protein belongs to the DEAD box helicase family. DDX21/DDX50 subfamily.

The protein localises to the nucleus. The enzyme catalyses ATP + H2O = ADP + phosphate + H(+). The protein is DEAD-box ATP-dependent RNA helicase 7 of Oryza sativa subsp. japonica (Rice).